The following is a 164-amino-acid chain: Large ribosomal subunit protein uL15 (164 aa).

Over residues 1–14 (MKLNEIQDNPGSSK) the composition is skewed to polar residues. Residues 1–35 (MKLNEIQDNPGSSKSRMRVGRGIGSGKGKTCGRGV) form a disordered region. Positions 21-35 (RGIGSGKGKTCGRGV) are enriched in gly residues.

It belongs to the universal ribosomal protein uL15 family. Part of the 50S ribosomal subunit.

Its function is as follows. Binds to the 23S rRNA. In Methylocella silvestris (strain DSM 15510 / CIP 108128 / LMG 27833 / NCIMB 13906 / BL2), this protein is Large ribosomal subunit protein uL15.